We begin with the raw amino-acid sequence, 157 residues long: Crossover junction endodeoxyribonuclease RuvC (157 aa).

Residues Asp-7, Glu-66, and Asp-139 contribute to the active site. 3 residues coordinate Mg(2+): Asp-7, Glu-66, and Asp-139.

The protein belongs to the RuvC family. Homodimer which binds Holliday junction (HJ) DNA. The HJ becomes 2-fold symmetrical on binding to RuvC with unstacked arms; it has a different conformation from HJ DNA in complex with RuvA. In the full resolvosome a probable DNA-RuvA(4)-RuvB(12)-RuvC(2) complex forms which resolves the HJ. The cofactor is Mg(2+).

It localises to the cytoplasm. It catalyses the reaction Endonucleolytic cleavage at a junction such as a reciprocal single-stranded crossover between two homologous DNA duplexes (Holliday junction).. In terms of biological role, the RuvA-RuvB-RuvC complex processes Holliday junction (HJ) DNA during genetic recombination and DNA repair. Endonuclease that resolves HJ intermediates. Cleaves cruciform DNA by making single-stranded nicks across the HJ at symmetrical positions within the homologous arms, yielding a 5'-phosphate and a 3'-hydroxyl group; requires a central core of homology in the junction. The consensus cleavage sequence is 5'-(A/T)TT(C/G)-3'. Cleavage occurs on the 3'-side of the TT dinucleotide at the point of strand exchange. HJ branch migration catalyzed by RuvA-RuvB allows RuvC to scan DNA until it finds its consensus sequence, where it cleaves and resolves the cruciform DNA. The polypeptide is Crossover junction endodeoxyribonuclease RuvC (Helicobacter pylori (strain P12)).